Reading from the N-terminus, the 839-residue chain is RNA-directed RNA polymerase 2a (839 aa).

One can recognise a RdRp catalytic domain in the interval 508 to 621; that stretch reads KHCLEIDLSK…FSKLPPVGDP (114 aa). A disordered region spans residues 773–824; it reads NGCVDSSGVDRRPPLSQFAGGETSKTKVSRQKPASEGLQKSQRESAIYSETF.

The protein belongs to the ssRNA positive-strand viruses RNA-directed RNA polymerase family. As to quaternary structure, interacts with replication protein 1a.

The catalysed reaction is RNA(n) + a ribonucleoside 5'-triphosphate = RNA(n+1) + diphosphate. RNA-dependent RNA polymerase which replicates the viral genome composed of 3 RNA segments, RNA1, RNA2 and RNA3. This is RNA-directed RNA polymerase 2a from Cucumber mosaic virus (strain Q) (CMV).